Here is a 514-residue protein sequence, read N- to C-terminus: 1,25-dihydroxyvitamin D(3) 24-hydroxylase, mitochondrial (514 aa).

A mitochondrion-targeting transit peptide spans Met1–Lys35. Cys462 provides a ligand contact to heme.

It belongs to the cytochrome P450 family. It depends on heme as a cofactor.

Its subcellular location is the mitochondrion. The catalysed reaction is calcitriol + 2 reduced [adrenodoxin] + O2 + 2 H(+) = calcitetrol + 2 oxidized [adrenodoxin] + H2O. It catalyses the reaction calcitetrol + 2 reduced [adrenodoxin] + O2 + 2 H(+) = (1S)-1,25-dihydroxy-24-oxocalciol + 2 oxidized [adrenodoxin] + 2 H2O. It carries out the reaction (1S)-1,25-dihydroxy-24-oxocalciol + 2 reduced [adrenodoxin] + O2 + 2 H(+) = (1S)-1,23,25-trihydroxy-24-oxocalciol + 2 oxidized [adrenodoxin] + H2O. The enzyme catalyses (1S)-1,23-dihydroxy-24,25,26,27-tetranorcalciol + 2 reduced [adrenodoxin] + O2 + 2 H(+) = (1S)-1-hydroxy-23-oxo-24,25,26,27-tetranorcalciol + 2 oxidized [adrenodoxin] + 2 H2O. The catalysed reaction is (1S)-1-hydroxy-23-oxo-24,25,26,27-tetranorcalciol + 2 reduced [adrenodoxin] + O2 + H(+) = calcitroate + 2 oxidized [adrenodoxin] + H2O. It catalyses the reaction calcidiol + 2 reduced [adrenodoxin] + O2 + 2 H(+) = secalciferol + 2 oxidized [adrenodoxin] + H2O. It carries out the reaction secalciferol + 2 reduced [adrenodoxin] + O2 + 2 H(+) = 25-hydroxy-24-oxocalciol + 2 oxidized [adrenodoxin] + 2 H2O. The enzyme catalyses 25-hydroxy-24-oxocalciol + 2 reduced [adrenodoxin] + O2 + 2 H(+) = 23S,25-dihydroxy-24-oxocholecalciferol + 2 oxidized [adrenodoxin] + H2O. The catalysed reaction is 20S,23-dihydroxycholecalciferol + 2 reduced [adrenodoxin] + O2 + 2 H(+) = 20S,23,25-trihydroxycholecalciferol + 2 oxidized [adrenodoxin] + H2O. It catalyses the reaction 20S,23-dihydroxycholecalciferol + 2 reduced [adrenodoxin] + O2 + 2 H(+) = 20S,23,24-trihydroxycholecalciferol + 2 oxidized [adrenodoxin] + H2O. It carries out the reaction 20S-hydroxycholecalciferol + 2 reduced [adrenodoxin] + O2 + 2 H(+) = 20S,25-dihydroxycholecalciferol + 2 oxidized [adrenodoxin] + H2O. The enzyme catalyses 20S-hydroxycholecalciferol + 2 reduced [adrenodoxin] + O2 + 2 H(+) = 20S,24S-dihydroxycholecalciferol + 2 oxidized [adrenodoxin] + H2O. The catalysed reaction is 20S-hydroxycholecalciferol + 2 reduced [adrenodoxin] + O2 + 2 H(+) = 20S,24R-dihydroxycholecalciferol + 2 oxidized [adrenodoxin] + H2O. A cytochrome P450 monooxygenase with a key role in vitamin D catabolism and calcium homeostasis. Via C24-oxidation pathway, catalyzes the inactivation of both the vitamin D precursor calcidiol (25-hydroxyvitamin D(3)) and the active hormone calcitriol (1-alpha,25-dihydroxyvitamin D(3)). With initial hydroxylation at C-24 (via C24-oxidation pathway), performs a sequential 6-step oxidation of calcitriol leading to the formation of the biliary metabolite calcitroic acid. Hydroxylates at C-24 or C-25 other vitamin D active metabolites, such as CYP11A1-derived secosteroids 20S-hydroxycholecalciferol and 20S,23-dihydroxycholecalciferol. Mechanistically, uses molecular oxygen inserting one oxygen atom into a substrate, and reducing the second into a water molecule, with two electrons provided by NADPH via FDXR/adrenodoxin reductase and FDX1/adrenodoxin. The polypeptide is 1,25-dihydroxyvitamin D(3) 24-hydroxylase, mitochondrial (Mus musculus (Mouse)).